The chain runs to 3174 residues: Intermembrane lipid transfer protein VPS13A (3174 aa).

Residues F3 to K116 form the Chorein N-terminal domain. TPR repeat units lie at residues L212–V245, L373–E406, and I537–D575. S839 bears the Phosphoserine mark. An FFAT motif is present at residues E842–C848. TPR repeat units follow at residues V1256–L1289 and L1291–E1320. S1416 carries the post-translational modification Phosphoserine. The TPR 6 repeat unit spans residues Y2009–D2041. The SHR-BD domain occupies V2209–G2454. 3 TPR repeats span residues P2568 to V2601, L2717 to E2751, and I2860 to F2898. Residues E2751–L3174 are required for mitochondrial localization. The required for lipid droplet localization stretch occupies residues P2953–A3027. A TPR 10 repeat occupies M3086 to E3119.

Belongs to the VPS13 family. Interacts (via FFAT motif) with VAPA and VAPB. Interacts with RAB7A. Interacts with XK. In terms of tissue distribution, expressed in red blood cells (at protein level). Widely expressed, with high expression in brain, heart, skeletal muscle and kidney.

It localises to the mitochondrion outer membrane. The protein localises to the endoplasmic reticulum membrane. It is found in the endosome membrane. The protein resides in the lysosome membrane. Its subcellular location is the lipid droplet. It localises to the golgi apparatus. The protein localises to the cytoplasmic vesicle. It is found in the secretory vesicle. The protein resides in the neuronal dense core vesicle. Functionally, mediates the transfer of lipids between membranes at organelle contact sites. Binds phospholipids. Required for the formation or stabilization of ER-mitochondria contact sites which enable transfer of lipids between the ER and mitochondria. Negatively regulates lipid droplet size and motility. Required for efficient lysosomal protein degradation. The protein is Intermembrane lipid transfer protein VPS13A (VPS13A) of Homo sapiens (Human).